The primary structure comprises 201 residues: Holliday junction branch migration complex subunit RuvA (201 aa).

The interval 1–63 (MYDYIKGTVT…EDNISLFGFQ (63 aa)) is domain I. The segment at 64 to 142 (TTEERYLFKK…DVVASEIVYV (79 aa)) is domain II. Positions 143–153 (APENDMVAGLS) are flexible linker. The segment at 153–201 (SPQLEEAVLALEALGYSTRELKKVIPKLAKEADLTSDAYIKLALQLMTK) is domain III.

This sequence belongs to the RuvA family. As to quaternary structure, homotetramer. Forms an RuvA(8)-RuvB(12)-Holliday junction (HJ) complex. HJ DNA is sandwiched between 2 RuvA tetramers; dsDNA enters through RuvA and exits via RuvB. An RuvB hexamer assembles on each DNA strand where it exits the tetramer. Each RuvB hexamer is contacted by two RuvA subunits (via domain III) on 2 adjacent RuvB subunits; this complex drives branch migration. In the full resolvosome a probable DNA-RuvA(4)-RuvB(12)-RuvC(2) complex forms which resolves the HJ.

The protein localises to the cytoplasm. The RuvA-RuvB-RuvC complex processes Holliday junction (HJ) DNA during genetic recombination and DNA repair, while the RuvA-RuvB complex plays an important role in the rescue of blocked DNA replication forks via replication fork reversal (RFR). RuvA specifically binds to HJ cruciform DNA, conferring on it an open structure. The RuvB hexamer acts as an ATP-dependent pump, pulling dsDNA into and through the RuvAB complex. HJ branch migration allows RuvC to scan DNA until it finds its consensus sequence, where it cleaves and resolves the cruciform DNA. The polypeptide is Holliday junction branch migration complex subunit RuvA (Listeria monocytogenes serovar 1/2a (strain ATCC BAA-679 / EGD-e)).